We begin with the raw amino-acid sequence, 488 residues long: Probable (S)-N-methylcoclaurine 3'-hydroxylase isozyme 2 (488 aa).

The helical transmembrane segment at 2 to 21 (EVLSIAIVSFSFLLFLFFIL) threads the bilayer. Residue Cys427 participates in heme binding.

Belongs to the cytochrome P450 family. The cofactor is heme. Expressed at low levels in roots.

It localises to the endoplasmic reticulum membrane. Its subcellular location is the microsome membrane. The enzyme catalyses (S)-N-methylcoclaurine + reduced [NADPH--hemoprotein reductase] + O2 = (S)-3'-hydroxy-N-methylcoclaurine + oxidized [NADPH--hemoprotein reductase] + H2O + H(+). The protein operates within alkaloid biosynthesis; (S)-reticuline biosynthesis; (S)-reticuline from (S)-norcoclaurine: step 3/4. 3'-hydroxylation of (S)-N-methylcoclaurine. The chain is Probable (S)-N-methylcoclaurine 3'-hydroxylase isozyme 2 (CYP80B2) from Coptis japonica (Japanese goldthread).